We begin with the raw amino-acid sequence, 113 residues long: Protein NATD1 (113 aa).

Residues 22-112 (EHDRRRRQFT…PLPQYLERLQ (91 aa)) form the N-acetyltransferase domain.

It belongs to the NATD1 family.

This chain is Protein NATD1 (NATD1), found in Homo sapiens (Human).